The following is a 149-amino-acid chain: FAD synthase (149 aa).

Residues 15 to 16 (VF), 20 to 23 (HVGH), and aspartate 101 each bind ATP.

It belongs to the archaeal FAD synthase family. Homodimer. It depends on a divalent metal cation as a cofactor.

The catalysed reaction is FMN + ATP + H(+) = FAD + diphosphate. It participates in cofactor biosynthesis; FAD biosynthesis; FAD from FMN: step 1/1. Functionally, catalyzes the transfer of the AMP portion of ATP to flavin mononucleotide (FMN) to produce flavin adenine dinucleotide (FAD) coenzyme. This chain is FAD synthase, found in Thermococcus kodakarensis (strain ATCC BAA-918 / JCM 12380 / KOD1) (Pyrococcus kodakaraensis (strain KOD1)).